The following is a 503-amino-acid chain: Capsanthin/capsorubin synthase, chromoplastic (503 aa).

Residue 88–117 participates in NAD(+) binding; it reads VIIIGTGPAGLRLAEQVSSRHSVKVCCVDP.

The protein belongs to the lycopene cyclase family.

Its subcellular location is the plastid. The protein localises to the chromoplast. It catalyses the reaction all-trans-violaxanthin = all-trans-capsorubin. The enzyme catalyses all-trans-antheraxanthin = all-trans-capsanthin. It functions in the pathway carotenoid biosynthesis; capsanthin biosynthesis; capsanthin from antheraxanthin: step 1/1. The protein operates within carotenoid biosynthesis; capsorubin biosynthesis; capsorubin from violaxanthin: step 1/1. Functionally, catalyzes the conversion of the ubiquitous 5,6-epoxycarotenoids, antheraxanthin and violaxanthin, into capsanthin and capsorubin, respectively. The sequence is that of Capsanthin/capsorubin synthase, chromoplastic (CCS) from Citrus sinensis (Sweet orange).